The chain runs to 122 residues: UPF0102 protein ECH_0093 (122 aa).

Belongs to the UPF0102 family.

This chain is UPF0102 protein ECH_0093, found in Ehrlichia chaffeensis (strain ATCC CRL-10679 / Arkansas).